We begin with the raw amino-acid sequence, 297 residues long: uncharacterized protein (297 aa).

The tract at residues 136–174 (FSETNDDSTDEEIDTPINDDDDDDKNNDADNNDINEDNK) is disordered. A compositionally biased stretch (acidic residues) spans 139–170 (TNDDSTDEEIDTPINDDDDDDKNNDADNNDIN).

To S.pombe SpBC725.03.

This is an uncharacterized protein from Saccharomyces cerevisiae (strain ATCC 204508 / S288c) (Baker's yeast).